Here is a 203-residue protein sequence, read N- to C-terminus: Recombination protein RecR (203 aa).

Residues 56–71 (CSVCGNVSDEERCRIC) form a C4-type zinc finger. The Toprim domain maps to 79 to 179 (SLVCVVEEPK…TVTRIASGLP (101 aa)).

The protein belongs to the RecR family.

In terms of biological role, may play a role in DNA repair. It seems to be involved in an RecBC-independent recombinational process of DNA repair. It may act with RecF and RecO. The sequence is that of Recombination protein RecR from Mycolicibacterium smegmatis (strain ATCC 700084 / mc(2)155) (Mycobacterium smegmatis).